We begin with the raw amino-acid sequence, 963 residues long: Kinesin-1 heavy chain (963 aa).

The residue at position 2 (A2) is an N-acetylalanine. Residues 8 to 325 (NIKVMCRFRP…LLFGQRAKTI (318 aa)) form the Kinesin motor domain. 85–92 (GQTSSGKT) is a binding site for ATP. K213 participates in a covalent cross-link: Glycyl lysine isopeptide (Lys-Gly) (interchain with G-Cter in SUMO2). A coiled-coil region spans residues 329–914 (VCVNVELTAE…AVRSKNMARR (586 aa)). The segment at 908-963 (SKNMARRGHSAQIAKPIRPGQHPAASPTHPGTVRGGGSFVQNNQPVGLRGGGGKQS) is disordered. The globular stretch occupies residues 915 to 963 (GHSAQIAKPIRPGQHPAASPTHPGTVRGGGSFVQNNQPVGLRGGGGKQS). Phosphoserine occurs at positions 933 and 945. Omega-N-methylarginine is present on R956.

This sequence belongs to the TRAFAC class myosin-kinesin ATPase superfamily. Kinesin family. Kinesin subfamily. As to quaternary structure, oligomer composed of two heavy chains and two light chains. Interacts with GRIP1 and PPP1R42. Interacts with SYBU. Interacts with JAKMIP1. Interacts with PLEKHM2. Interacts with ECPAS. Interacts with ZFYVE27. Found in a complex with OGT, RHOT1, RHOT2 and TRAK1. Interacts with APP (via cytoplasmic domain).

Its subcellular location is the cytoplasm. The protein resides in the cytoskeleton. It is found in the cytolytic granule membrane. It localises to the lysosome membrane. Its function is as follows. Microtubule-dependent motor required for normal distribution of mitochondria and lysosomes. May be involved in the mechanisms of growth arrest induced by exposure to DNA-damaging drugs or by cellular senescence. Can induce formation of neurite-like membrane protrusions in non-neuronal cells in a ZFYVE27-dependent manner. Regulates centrosome and nuclear positioning during mitotic entry. During the G2 phase of the cell cycle in a BICD2-dependent manner, antagonizes dynein function and drives the separation of nuclei and centrosomes. Required for anterograde axonal transportation of MAPK8IP3/JIP3 which is essential for MAPK8IP3/JIP3 function in axon elongation. Through binding with PLEKHM2 and ARL8B, directs lysosome movement toward microtubule plus ends. Involved in NK cell-mediated cytotoxicity. Drives the polarization of cytolytic granules and microtubule-organizing centers (MTOCs) toward the immune synapse between effector NK lymphocytes and target cells. This is Kinesin-1 heavy chain (Kif5b) from Mus musculus (Mouse).